Here is a 137-residue protein sequence, read N- to C-terminus: Nucleoside diphosphate kinase (137 aa).

Lysine 9, phenylalanine 57, arginine 85, threonine 91, arginine 102, and asparagine 112 together coordinate ATP. Histidine 115 acts as the Pros-phosphohistidine intermediate in catalysis.

The protein belongs to the NDK family. In terms of assembly, homotetramer. The cofactor is Mg(2+).

It localises to the cytoplasm. It carries out the reaction a 2'-deoxyribonucleoside 5'-diphosphate + ATP = a 2'-deoxyribonucleoside 5'-triphosphate + ADP. The catalysed reaction is a ribonucleoside 5'-diphosphate + ATP = a ribonucleoside 5'-triphosphate + ADP. Functionally, major role in the synthesis of nucleoside triphosphates other than ATP. The ATP gamma phosphate is transferred to the NDP beta phosphate via a ping-pong mechanism, using a phosphorylated active-site intermediate. The sequence is that of Nucleoside diphosphate kinase from Campylobacter jejuni subsp. jejuni serotype O:23/36 (strain 81-176).